Here is a 190-residue protein sequence, read N- to C-terminus: UPF0301 protein Rmet_2743 (190 aa).

It belongs to the UPF0301 (AlgH) family.

The sequence is that of UPF0301 protein Rmet_2743 from Cupriavidus metallidurans (strain ATCC 43123 / DSM 2839 / NBRC 102507 / CH34) (Ralstonia metallidurans).